The sequence spans 306 residues: Methionyl-tRNA formyltransferase (306 aa).

108–111 provides a ligand contact to (6S)-5,6,7,8-tetrahydrofolate; the sequence is SLLP.

The protein belongs to the Fmt family.

It carries out the reaction L-methionyl-tRNA(fMet) + (6R)-10-formyltetrahydrofolate = N-formyl-L-methionyl-tRNA(fMet) + (6S)-5,6,7,8-tetrahydrofolate + H(+). Its function is as follows. Attaches a formyl group to the free amino group of methionyl-tRNA(fMet). The formyl group appears to play a dual role in the initiator identity of N-formylmethionyl-tRNA by promoting its recognition by IF2 and preventing the misappropriation of this tRNA by the elongation apparatus. The protein is Methionyl-tRNA formyltransferase of Arthrobacter sp. (strain FB24).